Reading from the N-terminus, the 97-residue chain is Large ribosomal subunit protein uL23 (97 aa).

This sequence belongs to the universal ribosomal protein uL23 family. In terms of assembly, part of the 50S ribosomal subunit. Contacts protein L29, and trigger factor when it is bound to the ribosome.

In terms of biological role, one of the early assembly proteins it binds 23S rRNA. One of the proteins that surrounds the polypeptide exit tunnel on the outside of the ribosome. Forms the main docking site for trigger factor binding to the ribosome. The chain is Large ribosomal subunit protein uL23 from Sinorhizobium medicae (strain WSM419) (Ensifer medicae).